A 498-amino-acid polypeptide reads, in one-letter code: ATP synthase subunit beta, chloroplastic (498 aa).

172–179 (GGAGVGKT) serves as a coordination point for ATP.

This sequence belongs to the ATPase alpha/beta chains family. As to quaternary structure, F-type ATPases have 2 components, CF(1) - the catalytic core - and CF(0) - the membrane proton channel. CF(1) has five subunits: alpha(3), beta(3), gamma(1), delta(1), epsilon(1). CF(0) has four main subunits: a(1), b(1), b'(1) and c(9-12).

It localises to the plastid. It is found in the chloroplast thylakoid membrane. It catalyses the reaction ATP + H2O + 4 H(+)(in) = ADP + phosphate + 5 H(+)(out). Produces ATP from ADP in the presence of a proton gradient across the membrane. The catalytic sites are hosted primarily by the beta subunits. The chain is ATP synthase subunit beta, chloroplastic from Hyphaene coriacea (Ilala palm).